Consider the following 336-residue polypeptide: 3-isopropylmalate dehydrogenase (336 aa).

Arginine 87, arginine 97, arginine 121, and aspartate 211 together coordinate substrate. Positions 211, 235, and 239 each coordinate Mg(2+). Residue 271 to 283 participates in NAD(+) binding; that stretch reads GSAPDIAGQGIAD.

Belongs to the isocitrate and isopropylmalate dehydrogenases family. LeuB type 2 subfamily. Homodimer. Requires Mg(2+) as cofactor. It depends on Mn(2+) as a cofactor.

Its subcellular location is the cytoplasm. The enzyme catalyses (2R,3S)-3-isopropylmalate + NAD(+) = 4-methyl-2-oxopentanoate + CO2 + NADH. It participates in amino-acid biosynthesis; L-leucine biosynthesis; L-leucine from 3-methyl-2-oxobutanoate: step 3/4. Functionally, catalyzes the oxidation of 3-carboxy-2-hydroxy-4-methylpentanoate (3-isopropylmalate) to 3-carboxy-4-methyl-2-oxopentanoate. The product decarboxylates to 4-methyl-2 oxopentanoate. The protein is 3-isopropylmalate dehydrogenase of Mycobacterium sp. (strain JLS).